A 750-amino-acid polypeptide reads, in one-letter code: von Willebrand factor A domain-containing protein DDB_G0292188 (750 aa).

The VWFA domain occupies 17–249; sequence EIKTVFNSDS…IKDDLLLDVV (233 aa). Composition is skewed to low complexity over residues 586 to 595 and 603 to 645; these read SINDNNNSFN and PFFE…SSAS. A disordered region spans residues 586-657; that stretch reads SINDNNNSFN…PPPSQMLNEQ (72 aa).

This Dictyostelium discoideum (Social amoeba) protein is von Willebrand factor A domain-containing protein DDB_G0292188.